Consider the following 335-residue polypeptide: Thioredoxin reductase (335 aa).

FAD-binding positions include 22–25 (SGPA), 44–51 (EGTSFGGA), N60, and V93. Cysteines 145 and 148 form a disulfide. S166, H185, R191, I248, and Y268 together coordinate NADP(+). FAD-binding positions include D288 and 295–298 (RQAV). R295 serves as a coordination point for NADP(+).

Belongs to the class-II pyridine nucleotide-disulfide oxidoreductase family. As to quaternary structure, homodimer. It depends on FAD as a cofactor.

The protein localises to the cytoplasm. It catalyses the reaction [thioredoxin]-dithiol + NADP(+) = [thioredoxin]-disulfide + NADPH + H(+). The chain is Thioredoxin reductase from Mycobacterium tuberculosis (strain CDC 1551 / Oshkosh).